The following is a 294-amino-acid chain: Early 4 ORF6 protein (294 aa).

A Nuclear localization signal motif is present at residues A239–E255.

The protein belongs to the adenoviridae E4 30 to 34 kDa protein family. Interacts with E1B-55k.

The protein resides in the host nucleus. The protein localises to the host cytoplasm. Plays a major role to prevent cellular inhibition of viral genome replication by nuclear bodies. Assembles an SCF-like E3 ubiquitin ligase complex based on the cellular proteins ELOB, ELOC, CUL5 and RBX1, in cooperation with viral E1B-55K. This viral RING-type ligase ubiquitinates cellular substrates prior to proteasomal degradation: p53/TP53, LIG4, MRE11-RAD50-NBS1 (MRN) complex, ITGA3, DAXX and BLM. The protein is Early 4 ORF6 protein of Homo sapiens (Human).